The following is a 98-amino-acid chain: Co-chaperonin GroES (98 aa).

The protein belongs to the GroES chaperonin family. As to quaternary structure, heptamer of 7 subunits arranged in a ring. Interacts with the chaperonin GroEL.

The protein localises to the cytoplasm. In terms of biological role, together with the chaperonin GroEL, plays an essential role in assisting protein folding. The GroEL-GroES system forms a nano-cage that allows encapsulation of the non-native substrate proteins and provides a physical environment optimized to promote and accelerate protein folding. GroES binds to the apical surface of the GroEL ring, thereby capping the opening of the GroEL channel. This Brucella abortus (strain S19) protein is Co-chaperonin GroES.